The sequence spans 330 residues: Beta-ketoacyl-[acyl-carrier-protein] synthase III (330 aa).

Catalysis depends on residues C115 and H255. Residues Q256–R260 are ACP-binding. Residue N285 is part of the active site.

This sequence belongs to the thiolase-like superfamily. FabH family. In terms of assembly, homodimer.

The protein localises to the cytoplasm. The catalysed reaction is malonyl-[ACP] + acetyl-CoA + H(+) = 3-oxobutanoyl-[ACP] + CO2 + CoA. It participates in lipid metabolism; fatty acid biosynthesis. In terms of biological role, catalyzes the condensation reaction of fatty acid synthesis by the addition to an acyl acceptor of two carbons from malonyl-ACP. Catalyzes the first condensation reaction which initiates fatty acid synthesis and may therefore play a role in governing the total rate of fatty acid production. Possesses both acetoacetyl-ACP synthase and acetyl transacylase activities. Its substrate specificity determines the biosynthesis of branched-chain and/or straight-chain of fatty acids. In Helicobacter pylori (strain G27), this protein is Beta-ketoacyl-[acyl-carrier-protein] synthase III.